The sequence spans 207 residues: ATP-dependent Clp protease proteolytic subunit (207 aa).

Residue Ser111 is the Nucleophile of the active site. His136 is a catalytic residue.

Belongs to the peptidase S14 family. As to quaternary structure, fourteen ClpP subunits assemble into 2 heptameric rings which stack back to back to give a disk-like structure with a central cavity, resembling the structure of eukaryotic proteasomes. Component of the ClpAP and ClpXP complexes.

The protein localises to the cytoplasm. It catalyses the reaction Hydrolysis of proteins to small peptides in the presence of ATP and magnesium. alpha-casein is the usual test substrate. In the absence of ATP, only oligopeptides shorter than five residues are hydrolyzed (such as succinyl-Leu-Tyr-|-NHMec, and Leu-Tyr-Leu-|-Tyr-Trp, in which cleavage of the -Tyr-|-Leu- and -Tyr-|-Trp bonds also occurs).. Its function is as follows. Cleaves peptides in various proteins in a process that requires ATP hydrolysis. Has a chymotrypsin-like activity. Plays a major role in the degradation of misfolded proteins. The sequence is that of ATP-dependent Clp protease proteolytic subunit from Salmonella enteritidis PT4 (strain P125109).